A 257-amino-acid chain; its full sequence is Glutamate racemase (257 aa).

Residues 12-13 and 44-45 contribute to the substrate site; these read DS and YG. The active-site Proton donor/acceptor is C75. 76-77 is a substrate binding site; it reads NT. Catalysis depends on C176, which acts as the Proton donor/acceptor. 177-178 contributes to the substrate binding site; that stretch reads TH.

This sequence belongs to the aspartate/glutamate racemases family.

It catalyses the reaction L-glutamate = D-glutamate. It participates in cell wall biogenesis; peptidoglycan biosynthesis. Provides the (R)-glutamate required for cell wall biosynthesis. This Thermus thermophilus (strain ATCC BAA-163 / DSM 7039 / HB27) protein is Glutamate racemase.